We begin with the raw amino-acid sequence, 363 residues long: Ribosome-binding ATPase YchF (363 aa).

Residues 3-256 (FKCGIVGLPN…LDDEERDEFM (254 aa)) form the OBG-type G domain. 12–17 (NVGKST) provides a ligand contact to ATP. Serine 16 and threonine 36 together coordinate Mg(2+). Positions 278-361 (NLQTYFTAGV…KDGDVMNFLF (84 aa)) constitute a TGS domain.

This sequence belongs to the TRAFAC class OBG-HflX-like GTPase superfamily. OBG GTPase family. YchF/OLA1 subfamily. Requires Mg(2+) as cofactor.

ATPase that binds to both the 70S ribosome and the 50S ribosomal subunit in a nucleotide-independent manner. The protein is Ribosome-binding ATPase YchF of Escherichia coli O157:H7.